A 492-amino-acid polypeptide reads, in one-letter code: WD repeat-containing protein JIP5 (492 aa).

WD repeat units lie at residues R127–K166, K178–S217, R236–S274, D276–Q317, and R365–N405. Composition is skewed to acidic residues over residues E404–E414 and D422–T433. The interval E404–M472 is disordered. Basic and acidic residues predominate over residues K449–N462.

As to quaternary structure, interacts with BUD27 and GIS1.

Its subcellular location is the nucleus. The protein resides in the nucleolus. This Saccharomyces cerevisiae (strain ATCC 204508 / S288c) (Baker's yeast) protein is WD repeat-containing protein JIP5 (JIP5).